Consider the following 329-residue polypeptide: SARTTAPSVFPLAASCVDTSGSMMTLGCLVKGYFPEPVTVKWNSGALTSGVHTFPAVLQSGLYSLTSMVTVPSSQKATCNVAHPASSTKVDKTVEPIRTPZPBPCTCPKCPPPENLGGPSVFIFPPKPKDTLMISLTPRVTCVVVDVSQDEPEVQFTWFVDNKPVGNAETKPRVEQYNTTFRVESVLPIQHQDWLRGKEFKCKVYNKALPAPIEKTISKTKGAPRMPDVYTLPPSRDELSKSKVSVTCLIINFFPADIHVEWASNRVPVSEKEYKNTPPIEDADGSYFLYSKLTVDKSAWDQGTVYTCSVMHEALHNHVTQKAISRSPG.

Intrachain disulfides connect Cys28/Cys79, Cys142/Cys202, and Cys248/Cys308. The N-linked (GlcNAc...) asparagine glycan is linked to Asn178.

The protein resides in the secreted. The sequence is that of Ig gamma-2 chain C region from Cavia porcellus (Guinea pig).